The sequence spans 407 residues: Eukaryotic initiation factor 4A-II (407 aa).

Positions 1 to 22 (MSGGSADYNREHGGPEGMDPDG) are disordered. A Q motif motif is present at residues 33 to 61 (DNFDDMNLKESLLRGIYAYGFEKPSAIQQ). In terms of domain architecture, Helicase ATP-binding spans 64-235 (IIPCIKGYDV…KKFMRDPIRI (172 aa)). Residue 77–84 (AQSGTGKT) participates in ATP binding. Thr159 bears the Phosphothreonine mark. The DEAD box signature appears at 183-186 (DEAD). The 162-residue stretch at 246–407 (GIKQFYINVE…EMPMNVADLI (162 aa)) folds into the Helicase C-terminal domain.

Belongs to the DEAD box helicase family. eIF4A subfamily. In terms of assembly, eIF4F is a multi-subunit complex, the composition of which varies with external and internal environmental conditions. It is composed of at least EIF4A, EIF4E and EIF4G1/EIFFG3. Interacts with EIF4E. May interact with NOM1.

It catalyses the reaction ATP + H2O = ADP + phosphate + H(+). ATP-dependent RNA helicase which is a subunit of the eIF4F complex involved in cap recognition and is required for mRNA binding to ribosome. In the current model of translation initiation, eIF4A unwinds RNA secondary structures in the 5'-UTR of mRNAs which is necessary to allow efficient binding of the small ribosomal subunit, and subsequent scanning for the initiator codon. This Bos taurus (Bovine) protein is Eukaryotic initiation factor 4A-II (EIF4A2).